Reading from the N-terminus, the 329-residue chain is DNA-directed RNA polymerase subunit alpha (329 aa).

Residues 1 to 235 (MLGSVTDFLK…EQLEAFVDLR (235 aa)) are alpha N-terminal domain (alpha-NTD). Residues 249–329 (FDPILLRPVD…NWPPASIADE (81 aa)) form an alpha C-terminal domain (alpha-CTD) region.

It belongs to the RNA polymerase alpha chain family. In terms of assembly, homodimer. The RNAP catalytic core consists of 2 alpha, 1 beta, 1 beta' and 1 omega subunit. When a sigma factor is associated with the core the holoenzyme is formed, which can initiate transcription.

It catalyses the reaction RNA(n) + a ribonucleoside 5'-triphosphate = RNA(n+1) + diphosphate. In terms of biological role, DNA-dependent RNA polymerase catalyzes the transcription of DNA into RNA using the four ribonucleoside triphosphates as substrates. The sequence is that of DNA-directed RNA polymerase subunit alpha from Aeromonas hydrophila subsp. hydrophila (strain ATCC 7966 / DSM 30187 / BCRC 13018 / CCUG 14551 / JCM 1027 / KCTC 2358 / NCIMB 9240 / NCTC 8049).